We begin with the raw amino-acid sequence, 107 residues long: Protein Asterix (107 aa).

Over residues 1 to 15 (MSHSHGNASSVNDPR) the composition is skewed to polar residues. The disordered stretch occupies residues 1-25 (MSHSHGNASSVNDPRQPSAAKPYIP). A helical membrane pass occupies residues 82–98 (ISMAMMFAIMGLVTNYL).

It belongs to the Asterix family.

The protein resides in the membrane. The polypeptide is Protein Asterix (Arabidopsis thaliana (Mouse-ear cress)).